The chain runs to 644 residues: Pesticidal crystal protein Cry3Aa (644 aa).

Basic and acidic residues predominate over residues M1 to K13. Residues M1 to V20 are disordered. A propeptide spans M1 to L57 (removed in mature form).

Belongs to the delta endotoxin family.

Promotes colloidosmotic lysis by binding to the midgut epithelial cells of Coleoptera. The chain is Pesticidal crystal protein Cry3Aa (cry3Aa) from Bacillus thuringiensis subsp. san diego.